An 81-amino-acid chain; its full sequence is ATP synthase subunit c, chloroplastic (81 aa).

The next 2 membrane-spanning stretches (helical) occupy residues 3-23 and 57-77; these read PLIS…ASIG and LAFM…LLFA.

Belongs to the ATPase C chain family. As to quaternary structure, F-type ATPases have 2 components, F(1) - the catalytic core - and F(0) - the membrane proton channel. F(1) has five subunits: alpha(3), beta(3), gamma(1), delta(1), epsilon(1). F(0) has four main subunits: a(1), b(1), b'(1) and c(10-14). The alpha and beta chains form an alternating ring which encloses part of the gamma chain. F(1) is attached to F(0) by a central stalk formed by the gamma and epsilon chains, while a peripheral stalk is formed by the delta, b and b' chains.

The protein localises to the plastid. Its subcellular location is the chloroplast thylakoid membrane. Its function is as follows. F(1)F(0) ATP synthase produces ATP from ADP in the presence of a proton or sodium gradient. F-type ATPases consist of two structural domains, F(1) containing the extramembraneous catalytic core and F(0) containing the membrane proton channel, linked together by a central stalk and a peripheral stalk. During catalysis, ATP synthesis in the catalytic domain of F(1) is coupled via a rotary mechanism of the central stalk subunits to proton translocation. Functionally, key component of the F(0) channel; it plays a direct role in translocation across the membrane. A homomeric c-ring of between 10-14 subunits forms the central stalk rotor element with the F(1) delta and epsilon subunits. The protein is ATP synthase subunit c, chloroplastic of Gossypium barbadense (Sea Island cotton).